The sequence spans 217 residues: Adenylate kinase (217 aa).

Residue 11 to 16 participates in ATP binding; the sequence is GAGKGT. Residues 31 to 60 form an NMP region; sequence STGDMFREAMANETPVGLEAKSYIDKGNLV. AMP contacts are provided by residues threonine 32, arginine 37, 58–60, 86–89, and glutamine 93; these read NLV and GFPR. The interval 127–165 is LID; that stretch reads ARYICKKCGATYNKISNPTKVEGTCDRCGGHEFFQREDD. Arginine 128 is an ATP binding site. Positions 131 and 134 each coordinate Zn(2+). Residue 137–138 coordinates ATP; that stretch reads TY. Positions 151 and 154 each coordinate Zn(2+). AMP contacts are provided by arginine 162 and arginine 173. Glutamine 201 contributes to the ATP binding site.

Belongs to the adenylate kinase family. As to quaternary structure, monomer.

It is found in the cytoplasm. It catalyses the reaction AMP + ATP = 2 ADP. Its pathway is purine metabolism; AMP biosynthesis via salvage pathway; AMP from ADP: step 1/1. Functionally, catalyzes the reversible transfer of the terminal phosphate group between ATP and AMP. Plays an important role in cellular energy homeostasis and in adenine nucleotide metabolism. This is Adenylate kinase from Lactobacillus johnsonii (strain CNCM I-12250 / La1 / NCC 533).